Reading from the N-terminus, the 210-residue chain is uncharacterized protein (210 aa).

A signal peptide spans 1–21; sequence MLKMNVKKALVILVALALVAA.

This is an uncharacterized protein from Archaeoglobus fulgidus (strain ATCC 49558 / DSM 4304 / JCM 9628 / NBRC 100126 / VC-16).